The primary structure comprises 587 residues: Xyloglucan-specific endo-beta-1,4-glucanase BoGH9A (587 aa).

An N-terminal signal peptide occupies residues 1 to 19 (MKIVRYIALFGILSGLAVA). A lipid anchor (N-palmitoyl cysteine) is attached at Cys-20. Residue Cys-20 is the site of S-diacylglycerol cysteine attachment. The active-site Nucleophile is the Asp-185. Catalysis depends on residues His-511 and Asp-553. The Proton donor role is filled by Glu-562.

Belongs to the glycosyl hydrolase 9 (cellulase E) family.

The protein localises to the cell outer membrane. The enzyme catalyses xyloglucan + H2O = xyloglucan oligosaccharides.. The protein operates within glucan metabolism; xyloglucan degradation. Functionally, catalyzes endohydrolysis of 1,4-beta-D-glucosidic linkages in xyloglucan with retention of the beta-configuration of the glycosyl residues in xyloglucan degradation. Cleaves the backbone of the 3 major types of natural xyloglucans (seed galactoxyloglucan from tamarind kernel, dicot fucogalactoxyloglucan from lettuce leaves, and solanaceous arabinogalactoxyloglucan from tomato fruit), to produce xyloglucan oligosaccharides. May be superfluous in xyloglucan degradation compared to BoGH5A (AC A7LXT7), the other Xyloglucan-specific endo-beta-1,4-glucanase. The protein is Xyloglucan-specific endo-beta-1,4-glucanase BoGH9A of Bacteroides ovatus (strain ATCC 8483 / DSM 1896 / JCM 5824 / BCRC 10623 / CCUG 4943 / NCTC 11153).